Reading from the N-terminus, the 202-residue chain is Superoxide dismutase [Cu-Zn], chloroplastic (202 aa).

A chloroplast-targeting transit peptide spans 1 to 48 (MASQTLVSPSPLSSHSLLRTSFSGVSVKLAPQFSTLATSNFKPLTVVA). Cu cation contacts are provided by histidine 94, histidine 96, and histidine 111. An intrachain disulfide couples cysteine 105 to cysteine 194. Histidine 111, histidine 119, histidine 128, and aspartate 131 together coordinate Zn(2+). Histidine 168 is a Cu cation binding site.

Belongs to the Cu-Zn superoxide dismutase family. In terms of assembly, homotetramer. Requires Cu cation as cofactor. Zn(2+) is required as a cofactor.

Its subcellular location is the plastid. The protein localises to the chloroplast. It catalyses the reaction 2 superoxide + 2 H(+) = H2O2 + O2. Functionally, destroys radicals which are normally produced within the cells and which are toxic to biological systems. The chain is Superoxide dismutase [Cu-Zn], chloroplastic (SODCP) from Pisum sativum (Garden pea).